The sequence spans 539 residues: CTP synthase (539 aa).

An amidoligase domain region spans residues 1–267; the sequence is MTKYIFVTGG…DQKVVDFLHI (267 aa). Ser-13 contacts CTP. Residue Ser-13 participates in UTP binding. ATP is bound at residue 14-19; the sequence is SLGKGI. Tyr-54 serves as a coordination point for L-glutamine. Asp-71 serves as a coordination point for ATP. Positions 71 and 141 each coordinate Mg(2+). Residues 148 to 150, 188 to 193, and Lys-224 contribute to the CTP site; these read DME and KSKPTQ. UTP is bound by residues 188–193 and Lys-224; that span reads KSKPTQ. The Glutamine amidotransferase type-1 domain occupies 294 to 537; that stretch reads KITLVGKYVE…IGAASGLQVD (244 aa). Gly-356 serves as a coordination point for L-glutamine. Catalysis depends on Cys-383, which acts as the Nucleophile; for glutamine hydrolysis. Residues 384 to 387, Glu-407, and Arg-465 each bind L-glutamine; that span reads LGMQ. Catalysis depends on residues His-510 and Glu-512.

The protein belongs to the CTP synthase family. Homotetramer.

It carries out the reaction UTP + L-glutamine + ATP + H2O = CTP + L-glutamate + ADP + phosphate + 2 H(+). The enzyme catalyses L-glutamine + H2O = L-glutamate + NH4(+). It catalyses the reaction UTP + NH4(+) + ATP = CTP + ADP + phosphate + 2 H(+). It participates in pyrimidine metabolism; CTP biosynthesis via de novo pathway; CTP from UDP: step 2/2. Allosterically activated by GTP, when glutamine is the substrate; GTP has no effect on the reaction when ammonia is the substrate. The allosteric effector GTP functions by stabilizing the protein conformation that binds the tetrahedral intermediate(s) formed during glutamine hydrolysis. Inhibited by the product CTP, via allosteric rather than competitive inhibition. Its function is as follows. Catalyzes the ATP-dependent amination of UTP to CTP with either L-glutamine or ammonia as the source of nitrogen. Regulates intracellular CTP levels through interactions with the four ribonucleotide triphosphates. This chain is CTP synthase, found in Lactobacillus delbrueckii subsp. bulgaricus (strain ATCC BAA-365 / Lb-18).